We begin with the raw amino-acid sequence, 219 residues long: uncharacterized protein (219 aa).

This is an uncharacterized protein from Escherichia coli (Bacteriophage T4).